A 40-amino-acid polypeptide reads, in one-letter code: Photosystem II reaction center protein J (40 aa).

The helical transmembrane segment at 8-28 (IPLWLIGTVTGIPVIGLIGIF) threads the bilayer.

This sequence belongs to the PsbJ family. PSII is composed of 1 copy each of membrane proteins PsbA, PsbB, PsbC, PsbD, PsbE, PsbF, PsbH, PsbI, PsbJ, PsbK, PsbL, PsbM, PsbT, PsbX, PsbY, PsbZ, Psb30/Ycf12, at least 3 peripheral proteins of the oxygen-evolving complex and a large number of cofactors. It forms dimeric complexes.

The protein resides in the plastid. It localises to the chloroplast thylakoid membrane. Functionally, one of the components of the core complex of photosystem II (PSII). PSII is a light-driven water:plastoquinone oxidoreductase that uses light energy to abstract electrons from H(2)O, generating O(2) and a proton gradient subsequently used for ATP formation. It consists of a core antenna complex that captures photons, and an electron transfer chain that converts photonic excitation into a charge separation. The sequence is that of Photosystem II reaction center protein J from Vitis vinifera (Grape).